Reading from the N-terminus, the 102-residue chain is ATP-dependent Clp protease adapter protein ClpS (102 aa).

It belongs to the ClpS family. Binds to the N-terminal domain of the chaperone ClpA.

In terms of biological role, involved in the modulation of the specificity of the ClpAP-mediated ATP-dependent protein degradation. The chain is ATP-dependent Clp protease adapter protein ClpS from Shewanella halifaxensis (strain HAW-EB4).